Here is a 344-residue protein sequence, read N- to C-terminus: MIKVGIVGGTGYTGVELLRLLAQHPQARVEVITSRSEAGVKVADMYPNLRGHYDDLQFSVPDVQRLGACDVVFFATPHGVAHALAGELLDAGTRVIDLSADFRLADAEEWARWYGQPHGAPALLDEAVYGLPEVNREKIRQARLIAVPGCYPTATQLGLIPLLEAGLADASRLIADCKSGVSGAGRGAKVGSLFCEAGESMMAYAVKGHRHLPEISQGLCRASGGDVGLTFVPHLTPMIRGIHATLYAHVADRSVDLQALFEKRYADEPFVDVMPAGSHPETRSVRGANVCRIAVHRPQGGDLVVVLSVIDNLVKGASGQALQNMNILFGLDERLGLSHAALLP.

The active site involves Cys150.

Belongs to the NAGSA dehydrogenase family. Type 1 subfamily.

The protein resides in the cytoplasm. The enzyme catalyses N-acetyl-L-glutamate 5-semialdehyde + phosphate + NADP(+) = N-acetyl-L-glutamyl 5-phosphate + NADPH + H(+). The protein operates within amino-acid biosynthesis; L-arginine biosynthesis; N(2)-acetyl-L-ornithine from L-glutamate: step 3/4. Functionally, catalyzes the NADPH-dependent reduction of N-acetyl-5-glutamyl phosphate to yield N-acetyl-L-glutamate 5-semialdehyde. The chain is N-acetyl-gamma-glutamyl-phosphate reductase from Pseudomonas aeruginosa (strain UCBPP-PA14).